Reading from the N-terminus, the 241-residue chain is Uridylate kinase (241 aa).

Position 15 to 18 (15 to 18 (KLSG)) interacts with ATP. The tract at residues 23-28 (GTEGFG) is involved in allosteric activation by GTP. Residue Gly57 coordinates UMP. ATP-binding residues include Gly58 and Arg62. UMP is bound by residues Asp77 and 138–145 (TGNPFFTT). ATP-binding residues include Thr165, Phe171, and Asp174.

It belongs to the UMP kinase family. Homohexamer.

Its subcellular location is the cytoplasm. It carries out the reaction UMP + ATP = UDP + ADP. It participates in pyrimidine metabolism; CTP biosynthesis via de novo pathway; UDP from UMP (UMPK route): step 1/1. Its activity is regulated as follows. Allosterically activated by GTP. Inhibited by UTP. Functionally, catalyzes the reversible phosphorylation of UMP to UDP. In Shigella dysenteriae serotype 1 (strain Sd197), this protein is Uridylate kinase.